The sequence spans 337 residues: Pantothenate synthetase (337 aa).

M31–H38 contacts ATP. H38 (proton donor) is an active-site residue. Residue Q65 participates in (R)-pantoate binding. Q65 serves as a coordination point for beta-alanine. G152–D155 contributes to the ATP binding site. Residue Q158 coordinates (R)-pantoate. Residues V181 and L189 to R192 each bind ATP.

The protein belongs to the pantothenate synthetase family. In terms of assembly, homodimer.

The protein resides in the cytoplasm. The enzyme catalyses (R)-pantoate + beta-alanine + ATP = (R)-pantothenate + AMP + diphosphate + H(+). Its pathway is cofactor biosynthesis; (R)-pantothenate biosynthesis; (R)-pantothenate from (R)-pantoate and beta-alanine: step 1/1. Its function is as follows. Catalyzes the condensation of pantoate with beta-alanine in an ATP-dependent reaction via a pantoyl-adenylate intermediate. The sequence is that of Pantothenate synthetase from Streptomyces coelicolor (strain ATCC BAA-471 / A3(2) / M145).